The following is a 440-amino-acid chain: Chromosomal replication initiator protein DnaA (440 aa).

The interval 1 to 69 (MKERILQEIK…VKVVLGNDAT (69 aa)) is domain I, interacts with DnaA modulators. The domain II stretch occupies residues 69–96 (TFEITYEAFEPHSSYSEPLVKKRAVLLT). The segment at 97–313 (PLNPDYTFEN…GAIIKLLVYK (217 aa)) is domain III, AAA+ region. Residues Gly-140, Gly-142, Lys-143, and Thr-144 each coordinate ATP. The interval 314–440 (ETTGKEVDLR…GEISKRALSG (127 aa)) is domain IV, binds dsDNA.

This sequence belongs to the DnaA family. In terms of assembly, oligomerizes as a right-handed, spiral filament on DNA at oriC.

The protein localises to the cytoplasm. Functionally, plays an essential role in the initiation and regulation of chromosomal replication. ATP-DnaA binds to the origin of replication (oriC) to initiate formation of the DNA replication initiation complex once per cell cycle. Binds the DnaA box (a 9 base pair repeat at the origin) and separates the double-stranded (ds)DNA. Forms a right-handed helical filament on oriC DNA; dsDNA binds to the exterior of the filament while single-stranded (ss)DNA is stabiized in the filament's interior. The ATP-DnaA-oriC complex binds and stabilizes one strand of the AT-rich DNA unwinding element (DUE), permitting loading of DNA polymerase. After initiation quickly degrades to an ADP-DnaA complex that is not apt for DNA replication. Binds acidic phospholipids. The sequence is that of Chromosomal replication initiator protein DnaA from Thermotoga petrophila (strain ATCC BAA-488 / DSM 13995 / JCM 10881 / RKU-1).